The following is a 151-amino-acid chain: MTTETHTLKIEEIIELLPHRYPFLLVDRVLEFEESKYLRAVKNVSVNEPFFQGHFPGKPIFPGVLILEAMAQATGILAFKSVGKLEPGELYYFAGIDEARFKRPVVPGDQMIMEVTFEKTRRGLTRFKGVATVDGKIVCEATMMCARSREA.

Residue His-54 is part of the active site.

The protein belongs to the thioester dehydratase family. FabZ subfamily.

It localises to the cytoplasm. It catalyses the reaction a (3R)-hydroxyacyl-[ACP] = a (2E)-enoyl-[ACP] + H2O. Its function is as follows. Involved in unsaturated fatty acids biosynthesis. Catalyzes the dehydration of short chain beta-hydroxyacyl-ACPs and long chain saturated and unsaturated beta-hydroxyacyl-ACPs. The polypeptide is 3-hydroxyacyl-[acyl-carrier-protein] dehydratase FabZ (Erwinia tasmaniensis (strain DSM 17950 / CFBP 7177 / CIP 109463 / NCPPB 4357 / Et1/99)).